The sequence spans 91 residues: PqqA binding protein 1 (91 aa).

Belongs to the PqqD family. In terms of assembly, monomer. Interacts with PqqE.

It participates in cofactor biosynthesis; pyrroloquinoline quinone biosynthesis. Its function is as follows. Functions as a PqqA binding protein and presents PqqA to PqqE, in the pyrroloquinoline quinone (PQQ) biosynthetic pathway. The chain is PqqA binding protein 1 (pqqD1) from Pseudomonas putida (strain ATCC 47054 / DSM 6125 / CFBP 8728 / NCIMB 11950 / KT2440).